Consider the following 277-residue polypeptide: 2-dehydro-3-deoxyphosphooctonate aldolase (277 aa).

Belongs to the KdsA family.

The protein localises to the cytoplasm. It catalyses the reaction D-arabinose 5-phosphate + phosphoenolpyruvate + H2O = 3-deoxy-alpha-D-manno-2-octulosonate-8-phosphate + phosphate. It functions in the pathway carbohydrate biosynthesis; 3-deoxy-D-manno-octulosonate biosynthesis; 3-deoxy-D-manno-octulosonate from D-ribulose 5-phosphate: step 2/3. Its pathway is bacterial outer membrane biogenesis; lipopolysaccharide biosynthesis. The sequence is that of 2-dehydro-3-deoxyphosphooctonate aldolase from Brucella anthropi (strain ATCC 49188 / DSM 6882 / CCUG 24695 / JCM 21032 / LMG 3331 / NBRC 15819 / NCTC 12168 / Alc 37) (Ochrobactrum anthropi).